A 185-amino-acid chain; its full sequence is Large ribosomal subunit protein bL25 (185 aa).

This sequence belongs to the bacterial ribosomal protein bL25 family. CTC subfamily. Part of the 50S ribosomal subunit; part of the 5S rRNA/L5/L18/L25 subcomplex. Contacts the 5S rRNA. Binds to the 5S rRNA independently of L5 and L18.

In terms of biological role, this is one of the proteins that binds to the 5S RNA in the ribosome where it forms part of the central protuberance. This is Large ribosomal subunit protein bL25 from Chlamydia muridarum (strain MoPn / Nigg).